Reading from the N-terminus, the 377-residue chain is MKENSVGLVKTKYVTFKDDFYFESGRILSPITVAYETYGKLNEKKDNAILICHALTGSAHAAGYNSPDDQKPGWWDDMIGPGKAFDTDKYFIICSNFLGSCYGTTGPASIDPSTGKPYGLKFPVFTVKDMVKLQKKLIDYLGIEKLLCVAGGSMGGMQALEWAVTFPEKTYSIIPIATAGRITPMAIAFNTIGRFAIMKDPNWMNGDYYGKTFPRDGLAIARMAGHITYMSDKSFHKKFGRRYATFGGIYDFFGYFEVENYLRYNGYKFTERFDANSYLYIIKAMDIFDLSYGYGSYEEAIGRIEADSLFITFTSDFLFPSYQTEEIVNIMKNHGKNPEWVNIESDYGHDAFLLEFDTQTSCIKEFLSKIYNKVANQ.

One can recognise an AB hydrolase-1 domain in the interval 47-355; sequence NAILICHALT…DYGHDAFLLE (309 aa). Ser-153 (nucleophile) is an active-site residue. Substrate is bound at residue Arg-222. Catalysis depends on residues Asp-316 and His-349. Asp-350 lines the substrate pocket.

This sequence belongs to the AB hydrolase superfamily. MetX family. As to quaternary structure, homodimer.

It localises to the cytoplasm. It carries out the reaction L-homoserine + acetyl-CoA = O-acetyl-L-homoserine + CoA. The protein operates within amino-acid biosynthesis; L-methionine biosynthesis via de novo pathway; O-acetyl-L-homoserine from L-homoserine: step 1/1. In terms of biological role, transfers an acetyl group from acetyl-CoA to L-homoserine, forming acetyl-L-homoserine. This Deferribacter desulfuricans (strain DSM 14783 / JCM 11476 / NBRC 101012 / SSM1) protein is Homoserine O-acetyltransferase.